The primary structure comprises 163 residues: MQHYVTPDLCDAYPDLVQVLEPMFSNFGGRDSFGGQIVTIKCFEDNSLVKEQVDLDGKGKVLVVDGGGSLRRALLGDMLAEKAAKNGWEGLVIYGCVRDVDVLVQTDVGVQALASHPMKTDKRGIGDLNVAVTFAGVTFRPGEYVYADNNGVIVSPSPLKMPE.

Residues 76 to 79 (GDML) and Arg98 contribute to the substrate site. Asp99 lines the a divalent metal cation pocket.

The protein belongs to the class II aldolase/RraA-like family. As to quaternary structure, homotrimer. A divalent metal cation serves as cofactor.

It catalyses the reaction 4-hydroxy-4-methyl-2-oxoglutarate = 2 pyruvate. It carries out the reaction oxaloacetate + H(+) = pyruvate + CO2. In terms of biological role, catalyzes the aldol cleavage of 4-hydroxy-4-methyl-2-oxoglutarate (HMG) into 2 molecules of pyruvate. Also contains a secondary oxaloacetate (OAA) decarboxylase activity due to the common pyruvate enolate transition state formed following C-C bond cleavage in the retro-aldol and decarboxylation reactions. The protein is Putative 4-hydroxy-4-methyl-2-oxoglutarate aldolase of Pseudomonas entomophila (strain L48).